The sequence spans 132 residues: Small ribosomal subunit protein uS8c (132 aa).

It belongs to the universal ribosomal protein uS8 family. In terms of assembly, part of the 30S ribosomal subunit.

It is found in the plastid. Its subcellular location is the chloroplast. In terms of biological role, one of the primary rRNA binding proteins, it binds directly to 16S rRNA central domain where it helps coordinate assembly of the platform of the 30S subunit. The polypeptide is Small ribosomal subunit protein uS8c (rps8) (Anthoceros angustus (Hornwort)).